Here is a 790-residue protein sequence, read N- to C-terminus: Pre-mRNA-splicing factor cwf3 (790 aa).

HAT repeat units lie at residues 12–44 (DLINVDDEPFELELLRDPYSLKSWLRYIKTHEG), 45–77 (STLEKRVLLFERACSELPGSYKIWKSYLELRVA), 89–121 (EAFASVNDCFERSLILLHKMPVIWKLYLQFLMK), 123–157 (PNVTKIRCTFNSALRALPVTQHDDIWDMFTKYAED), 159–190 (GGLFCIHVYRRYIQVEPRAIENYIEILCKLGL), 193–228 (EAARQYEDILNRPVFLSAKRKSNYQIWLEFSELVVQ), 233–266 (TQNIDVEKVFRAGIKRFSDQAGKLWTYLAQYYIR), 268–303 (GDYEKARSTFYEGMNNIMTVRNFTIIFDAFVEFEEQ), 331–364 (KILDKRPLYINDVLLRQNINNVDEWLRRVKFLED), 368–402 (KVVQVYTDAIKNVNPKLAHGSLGKLFSEFARFYEN), 404–440 (DDLEQSRIIFEKATHVPYKTVNELAQVWIDWAEMELR), 457–492 (APRKSHISFFDESLSPQVRLHKSSKIWMYYLDLEES), 494–526 (GTIETTRKLYDRVFELKIATPQVVVNYANLLEE), 528–562 (AYFEDSFKIYERGVALFSYPVAFELWNLYLTKFVK), 567–601 (THMERTRDLFEQALEGCPPEFSKSIYLLYADFEEK), 639–673 (YGVLATRTVYEKAIESLSDSEVKDMCLRFAEMETK), and 675–709 (GEIDRARLIYIHGSQYCDPRVETDYWKAWQEFEIR). A disordered region spans residues 769–790 (LAGFVLSKSNPQETSKITGEEN). Positions 775–790 (SKSNPQETSKITGEEN) are enriched in polar residues.

It belongs to the crooked-neck family. Belongs to the 40S cdc5-associated complex (or cwf complex), a spliceosome sub-complex reminiscent of a late-stage spliceosome composed of the U2, U5 and U6 snRNAs and at least brr2, cdc5, cwf2/prp3, cwf3/syf1, cwf4/syf3, cwf5/ecm2, spp42/cwf6, cwf7/spf27, cwf8, cwf9, cwf10, cwf11, cwf12, prp45/cwf13, cwf14, cwf15, cwf16, cwf17, cwf18, cwf19, cwf20, cwf21, cwf22, cwf23, cwf24, cwf25, cwf26, cyp7/cwf27, cwf28, cwf29/ist3, lea1, msl1, prp5/cwf1, prp10, prp12/sap130, prp17, prp22, sap61, sap62, sap114, sap145, slu7, smb1, smd1, smd3, smf1, smg1 and syf2.

The protein resides in the nucleus. Involved in pre-mRNA splicing and cell cycle progression. The chain is Pre-mRNA-splicing factor cwf3 (cwf3) from Schizosaccharomyces pombe (strain 972 / ATCC 24843) (Fission yeast).